A 206-amino-acid polypeptide reads, in one-letter code: Small ribosomal subunit protein uS4 (206 aa).

In terms of domain architecture, S4 RNA-binding spans 96-156 (TRLDNVVYRM…EKSRTQARIK (61 aa)).

This sequence belongs to the universal ribosomal protein uS4 family. In terms of assembly, part of the 30S ribosomal subunit. Contacts protein S5. The interaction surface between S4 and S5 is involved in control of translational fidelity.

One of the primary rRNA binding proteins, it binds directly to 16S rRNA where it nucleates assembly of the body of the 30S subunit. Its function is as follows. With S5 and S12 plays an important role in translational accuracy. The chain is Small ribosomal subunit protein uS4 from Shewanella amazonensis (strain ATCC BAA-1098 / SB2B).